The primary structure comprises 141 residues: Large ribosomal subunit protein uL11 (141 aa).

The protein belongs to the universal ribosomal protein uL11 family. As to quaternary structure, part of the ribosomal stalk of the 50S ribosomal subunit. Interacts with L10 and the large rRNA to form the base of the stalk. L10 forms an elongated spine to which L12 dimers bind in a sequential fashion forming a multimeric L10(L12)X complex. In terms of processing, one or more lysine residues are methylated.

In terms of biological role, forms part of the ribosomal stalk which helps the ribosome interact with GTP-bound translation factors. The sequence is that of Large ribosomal subunit protein uL11 from Lactococcus lactis subsp. cremoris (strain MG1363).